The following is a 174-amino-acid chain: ATP-dependent protease subunit HslV (174 aa).

The active site involves Thr2. Na(+) contacts are provided by Ala156, Cys159, and Thr162.

This sequence belongs to the peptidase T1B family. HslV subfamily. A double ring-shaped homohexamer of HslV is capped on each side by a ring-shaped HslU homohexamer. The assembly of the HslU/HslV complex is dependent on binding of ATP.

It localises to the cytoplasm. It carries out the reaction ATP-dependent cleavage of peptide bonds with broad specificity.. Its activity is regulated as follows. Allosterically activated by HslU binding. In terms of biological role, protease subunit of a proteasome-like degradation complex believed to be a general protein degrading machinery. This Agrobacterium fabrum (strain C58 / ATCC 33970) (Agrobacterium tumefaciens (strain C58)) protein is ATP-dependent protease subunit HslV.